The primary structure comprises 113 residues: Large ribosomal subunit protein bL19 (113 aa).

This sequence belongs to the bacterial ribosomal protein bL19 family.

This protein is located at the 30S-50S ribosomal subunit interface and may play a role in the structure and function of the aminoacyl-tRNA binding site. In Desulfitobacterium hafniense (strain DSM 10664 / DCB-2), this protein is Large ribosomal subunit protein bL19.